Here is a 217-residue protein sequence, read N- to C-terminus: Ribosome maturation factor RimP (217 aa).

This sequence belongs to the RimP family.

The protein resides in the cytoplasm. Functionally, required for maturation of 30S ribosomal subunits. The polypeptide is Ribosome maturation factor RimP (Nocardia farcinica (strain IFM 10152)).